Here is a 550-residue protein sequence, read N- to C-terminus: Protein UshA (550 aa).

The first 25 residues, 1–25 (MKLLQRGVALALLTTFTLASETALA), serve as a signal peptide directing secretion. Asp-41, His-43, Asp-84, Asn-116, His-217, His-252, and Gln-254 together coordinate Zn(2+). Cysteines 258 and 275 form a disulfide. Substrate is bound by residues 375–379 (RDKVR) and 498–504 (FNATGGD).

Belongs to the 5'-nucleotidase family. As to quaternary structure, monomer. The cofactor is Zn(2+).

It localises to the periplasm. It carries out the reaction UDP-sugar + H2O = UMP + alpha-D-aldose 1-phosphate.. It catalyses the reaction a ribonucleoside 5'-phosphate + H2O = a ribonucleoside + phosphate. The activity of this protein is inhibited by an intracellular protein inhibitor. Its function is as follows. Degradation of external UDP-glucose to uridine monophosphate and glucose-1-phosphate, which can then be used by the cell. The sequence is that of Protein UshA (ushA) from Escherichia coli (strain K12).